We begin with the raw amino-acid sequence, 388 residues long: Branched-chain-amino-acid aminotransferase 2, chloroplastic (388 aa).

The N-terminal 22 residues, 1–22 (MIKTITSLRKTLVLPLHLHIRT), are a transit peptide targeting the chloroplast. Lys235 bears the N6-(pyridoxal phosphate)lysine mark.

The protein belongs to the class-IV pyridoxal-phosphate-dependent aminotransferase family. Requires pyridoxal 5'-phosphate as cofactor.

The protein resides in the plastid. The protein localises to the chloroplast. The enzyme catalyses L-leucine + 2-oxoglutarate = 4-methyl-2-oxopentanoate + L-glutamate. The catalysed reaction is L-isoleucine + 2-oxoglutarate = (S)-3-methyl-2-oxopentanoate + L-glutamate. It carries out the reaction L-valine + 2-oxoglutarate = 3-methyl-2-oxobutanoate + L-glutamate. The protein operates within amino-acid biosynthesis; L-isoleucine biosynthesis; L-isoleucine from 2-oxobutanoate: step 4/4. Its pathway is amino-acid biosynthesis; L-leucine biosynthesis; L-leucine from 3-methyl-2-oxobutanoate: step 4/4. It participates in amino-acid biosynthesis; L-valine biosynthesis; L-valine from pyruvate: step 4/4. In terms of biological role, converts 2-oxo acids to branched-chain amino acids. Shows activity with L-Leu, L-Ile and L-Val as amino donors and 2-oxoglutarate as an amino acceptor, but no activity for D-isomers of Leu, Ile, Val, Asp, Glu or Ala. The polypeptide is Branched-chain-amino-acid aminotransferase 2, chloroplastic (BCAT2) (Arabidopsis thaliana (Mouse-ear cress)).